A 318-amino-acid polypeptide reads, in one-letter code: Cytochrome f (318 aa).

The signal sequence occupies residues 1–33; that stretch reads MKNTFSWIKKEITRSISLSLMIYIITRTSISNA. Heme is bound by residues Tyr34, Cys54, Cys57, and His58. Residues 284–304 form a helical membrane-spanning segment; that stretch reads VQGLLFFLASVILAQIFLVLK.

Belongs to the cytochrome f family. In terms of assembly, the 4 large subunits of the cytochrome b6-f complex are cytochrome b6, subunit IV (17 kDa polypeptide, petD), cytochrome f and the Rieske protein, while the 4 small subunits are PetG, PetL, PetM and PetN. The complex functions as a dimer. Requires heme as cofactor.

It localises to the plastid. It is found in the chloroplast thylakoid membrane. Functionally, component of the cytochrome b6-f complex, which mediates electron transfer between photosystem II (PSII) and photosystem I (PSI), cyclic electron flow around PSI, and state transitions. In Oenothera biennis (German evening primrose), this protein is Cytochrome f.